A 320-amino-acid chain; its full sequence is Mitochondrial fission regulator 1-like-B (320 aa).

The segment at 1–37 (MASLGAAAEPERSLFGKDGAEACESPEGRRSGRRKRT) is disordered. Positions 9 to 30 (EPERSLFGKDGAEACESPEGRR) are enriched in basic and acidic residues.

This sequence belongs to the MTFR1 family.

It is found in the mitochondrion outer membrane. In terms of biological role, mitochondrial protein required for adaptation of miochondrial dynamics to metabolic changes. Regulates mitochondrial morphology at steady state and mediates AMPK-dependent stress-induced mitochondrial fragmentation via the control of OPA1 levels. This chain is Mitochondrial fission regulator 1-like-B (mtfr1l-b), found in Xenopus laevis (African clawed frog).